The following is a 1010-amino-acid chain: PHD finger protein 20 (1010 aa).

2 Tudor domains span residues 4–69 (HPPN…RPLE) and 83–147 (GSSE…GNAR). 2 disordered regions span residues 142 to 373 (IVGN…EGQL) and 483 to 609 (EKSP…GKLK). Residues 147 to 246 (RPKETDHKSL…VEKKPEKDLV (100 aa)) show a composition bias toward basic and acidic residues. Serine 159 bears the Phosphoserine mark. Positions 257–269 (KRKRGRPPSITPT) form a DNA-binding region, a.T hook. The span at 267–280 (TPTAVDSNSQTLQP) shows a compositional bias: polar residues. 3 stretches are compositionally biased toward basic and acidic residues: residues 292-325 (KRSD…DLSR), 483-493 (EKSPEPEEGPG), and 525-541 (AKEK…ELVR). The C2H2-type zinc finger occupies 455–485 (FRCKVLDCLKFFRKAKLLHYHMKYFHGMEKS). Over residues 542–554 (VKPKKKKKKKKKT) the composition is skewed to basic residues. The PHD-type zinc finger occupies 657–703 (RCICEVQEENDFMIQCEECQCWQHGVCMGLLEENVPEKYTCYVCQDP). Residues 804–827 (RSEESPSYRTLNGAVEKPSPLPRS) form a disordered region. Lysine 841 bears the N6-acetyllysine mark. Phosphoserine is present on residues serine 876 and serine 878. A disordered region spans residues 877-902 (LSPRLGWPIDQDRSRGDIDPKPSSPK). Residues 886 to 902 (DQDRSRGDIDPKPSSPK) are compositionally biased toward basic and acidic residues.

Homodimer; disulfide-linked. Component of some MLL1/MLL complex, at least composed of the core components KMT2A/MLL1, ASH2L, HCFC1, WDR5 and RBBP5, as well as the facultative components BACC1, CHD8, E2F6, HSP70, INO80C, KANSL1, LAS1L, MAX, MCRS1, MGA, MYST1/MOF, PELP1, PHF20, PRP31, RING2, RUVB1/TIP49A, RUVB2/TIP49B, SENP3, TAF1, TAF4, TAF6, TAF7, TAF9 and TEX10. Component of the NSL complex at least composed of MOF/KAT8, KANSL1, KANSL2, KANSL3, MCRS1, PHF20, OGT1/OGT, WDR5 and HCFC1. In terms of processing, ubiquitinated by TRIM26; leading to proteasomal degradation.

The protein localises to the nucleus. Functionally, contributes to methyllysine-dependent p53/TP53 stabilization and up-regulation after DNA damage. Methyllysine-binding protein, component of the MOF histone acetyltransferase protein complex. Not required for maintaining the global histone H4 'Lys-16' acetylation (H4K16ac) levels or locus specific histone acetylation, but instead works downstream in transcriptional regulation of MOF target genes. As part of the NSL complex it may be involved in acetylation of nucleosomal histone H4 on several lysine residues. This is PHD finger protein 20 (Phf20) from Mus musculus (Mouse).